A 207-amino-acid chain; its full sequence is TM2 domain-containing protein 1 (207 aa).

The N-terminal stretch at 1–37 (MAAAWPSGPSAPEAVTARLVGVLWFVSVTTGPWGAVA) is a signal peptide. Residues 40–128 (AGGEESLKCE…YSYKVAVALS (89 aa)) lie on the Extracellular side of the membrane. N-linked (GlcNAc...) asparagine glycosylation is found at asparagine 72, asparagine 75, asparagine 87, and asparagine 96. Positions 118–166 (GYSYKVAVALSLFLGWLGADRFYLGYPALGLLKFCTVGFCGIGSLIDFI) constitute a TM2 domain. A helical transmembrane segment spans residues 129–149 (LFLGWLGADRFYLGYPALGLL). At 150–153 (KFCT) the chain is on the cytoplasmic side. The helical transmembrane segment at 154–174 (VGFCGIGSLIDFILISMQIVG) threads the bilayer. Over 175 to 207 (PSDGSSYIIDYYGTRLTRLSITNETFRKTQLYP) the chain is Extracellular. N-linked (GlcNAc...) asparagine glycosylation occurs at asparagine 197.

This sequence belongs to the TM2 family. Interacts with APP beta-APP42 (amyloid-beta protein 42). Post-translationally, N-glycosylated. In terms of tissue distribution, widely expressed.

It localises to the membrane. Functionally, may participate in amyloid-beta-induced apoptosis via its interaction with beta-APP42. The sequence is that of TM2 domain-containing protein 1 (TM2D1) from Homo sapiens (Human).